A 596-amino-acid polypeptide reads, in one-letter code: Aspartic proteinase yapsin-7 (596 aa).

Positions 1 to 25 are cleaved as a signal peptide; it reads MTCLILWYLWLISTFQLEFATASTA. Residues Asn-26 and Asn-59 are each glycosylated (N-linked (GlcNAc...) asparagine). The Lumenal segment spans residues 26 to 575; the sequence is NTTTTAKSGT…SPYTFNKDPA (550 aa). In terms of domain architecture, Peptidase A1 spans 56-440; that stretch reads YYVNSTFGTP…DLEDNTIAIA (385 aa). Residue Asp-74 is part of the active site. Residues Asn-106, Asn-131, Asn-140, Asn-143, Asn-148, Asn-175, and Asn-308 are each glycosylated (N-linked (GlcNAc...) asparagine). The active site involves Asp-321. Residues Asn-391, Asn-455, Asn-478, Asn-484, Asn-549, and Asn-552 are each glycosylated (N-linked (GlcNAc...) asparagine). Residues 576–596 form a helical membrane-spanning segment; the sequence is GHVTRIASLLLLSIFSILIVL.

This sequence belongs to the peptidase A1 family.

The protein resides in the cytoplasm. It is found in the endoplasmic reticulum membrane. In Saccharomyces cerevisiae (strain ATCC 204508 / S288c) (Baker's yeast), this protein is Aspartic proteinase yapsin-7 (YPS7).